Reading from the N-terminus, the 64-residue chain is Alpha-conotoxin-like Lt1.3 (64 aa).

The N-terminal stretch at 1 to 21 (MGMRMMFTMFLLVVLTTTVVS) is a signal peptide. Positions 22–45 (FNLDRESNHENRRTSNQITRGMWD) are excised as a propeptide. 2 disulfides stabilise this stretch: cysteine 47-cysteine 53 and cysteine 48-cysteine 61. Residues 49-51 (DDP) form a lacks the Ser-Xaa-Pro motif that is crucial for potent interaction with nAChR region.

Belongs to the conotoxin A superfamily. As to expression, expressed by the venom duct.

The protein resides in the secreted. Functionally, alpha-conotoxins act on postsynaptic membranes, they bind to the nicotinic acetylcholine receptors (nAChR) and thus inhibit them. Has possibly a distinct nAChR binding mode from other alpha-conotoxins, due to a different three residue motif (lacks the Ser-Xaa-Pro motif). This Conus litteratus (Lettered cone) protein is Alpha-conotoxin-like Lt1.3.